Reading from the N-terminus, the 758-residue chain is MAEPRQEFEVMEDHAGTYGLGDRKDQGGYTMHQDQEGDTDAGLKESPLQTPTEDGSEEPGSETSDAKSTPTAEDVTAPLVDEGAPGKQAAAQPHTEIPEGTTAEEAGIGDTPSLEDEAAGHVTQEPESGKVVQEGFLREPGPPGLSHQLMSGMPGAPLLPEGPREATRQPSGTGPEDTEGGRHAPELLKHQLLGDLHQEGPPLKGAGGKERPGSKEEVDEDRDVDESSPQDSPPSKASPAQDGRPPQTAAREATSIPGFPAEGAIPLPVDFLSKVSTEIPASEPDGPSVGRAKGQDAPLEFTFHVEITPNVQKEQAHSEEHLGRAAFPGAPGEGPEARGPSLGEDTKEADLPEPSEKQPAAAPRGKPVSRVPQLKARMVSKSKDGTGSDDKKAKTSTRSSAKTLKNRPCLSPKHPTPGSSDPLIQPSSPAVCPEPPSSPKYVSSVTSRTGSSGAKEMKLKGADGKTKIATPRGAAPPGQKGQANATRIPAKTPPAPKTPPSSGEPPKSGDRSGYSSPGSPGTPGSRSRTPSLPTPPTREPKKVAVVRTPPKSPSSAKSRLQTAPVPMPDLKNVKSKIGSTENLKHQPGGGKVQIINKKLDLSNVQSKCGSKDNIKHVPGGGSVQIVYKPVDLSKVTSKCGSLGNIHHKPGGGQVEVKSEKLDFKDRVQSKIGSLDNITHVPGGGNKKIETHKLTFRENAKAKTDHGAEIVYKSPVVSGDTSPRHLSNVSSTGSIDMVDSPQLATLADEVSASLAKQGL.

A compositionally biased stretch (basic and acidic residues) spans 1 to 26; sequence MAEPRQEFEVMEDHAGTYGLGDRKDQ. The interval 1-573 is disordered; the sequence is MAEPRQEFEV…PVPMPDLKNV (573 aa). N-acetylalanine is present on A2. Y18 is modified (phosphotyrosine; by FYN). A Phosphotyrosine modification is found at Y29. K44 participates in a covalent cross-link: Glycyl lysine isopeptide (Lys-Gly) (interchain with G-Cter in ubiquitin). Phosphoserine is present on residues S46 and S61. Positions 61 to 71 are enriched in polar residues; sequence SETSDAKSTPT. T69 and T71 each carry phosphothreonine. N-linked (Glc) (glycation) lysine; in PHF-tau; in vitro glycosylation occurs at K87. The residue at position 111 (T111) is a Phosphothreonine. Basic and acidic residues-rich tracts occupy residues 179–189 and 207–216; these read EGGRHAPELLK and GGKERPGSKE. S214 carries the phosphoserine; by SGK1 modification. Positions 217 to 228 are enriched in acidic residues; sequence EVDEDRDVDESS. Residues 314-323 show a composition bias toward basic and acidic residues; that stretch reads EQAHSEEHLG. A compositionally biased stretch (low complexity) spans 324 to 340; it reads RAAFPGAPGEGPEARGP. Basic and acidic residues-rich tracts occupy residues 344-356 and 381-393; these read EDTK…EPSE and KSKD…DKKA. N-linked (Glc) (glycation) lysine; in PHF-tau; in vitro glycosylation is present at K383. Positions 442–453 are enriched in low complexity; the sequence is VSSVTSRTGSSG. Residues 455–466 are compositionally biased toward basic and acidic residues; it reads KEMKLKGADGKT. K467 is a glycosylation site (N-linked (Glc) (glycation) lysine; in PHF-tau; in vitro). T470 is subject to Phosphothreonine; by PDPK1. Residue R472 is modified to Omega-N-methylarginine. K480 is a glycosylation site (N-linked (Glc) (glycation) lysine; in PHF-tau; in vitro). K480 is subject to N6,N6-dimethyllysine; alternate. K480 is modified (N6-acetyllysine; alternate). N484 carries the post-translational modification Deamidated asparagine; in tau and PHF-tau; partial. T486 carries the phosphothreonine modification. K491 is a glycosylation site (N-linked (Glc) (glycation) lysine; in PHF-tau; in vitro). Positions 491 to 503 are enriched in pro residues; it reads KTPPAPKTPPSSG. At T492 the chain carries Phosphothreonine. T498 carries the phosphothreonine; by PDPK1 modification. Residues S502, S508, and S512 each carry the phosphoserine modification. Positions 504–531 are enriched in low complexity; that stretch reads EPPKSGDRSGYSSPGSPGTPGSRSRTPS. Position 514 is a phosphotyrosine; by TTBK1 (Y514). Phosphoserine; by PDPK1 and TTBK1 is present on residues S515 and S516. The residue at position 519 (S519) is a Phosphoserine; by CK1, PDPK1 and TTBK1. The residue at position 522 (T522) is a Phosphothreonine; by CK1 and PDPK1. The O-linked (GlcNAc) serine glycan is linked to S525. T529 is subject to Phosphothreonine; by BRSK1, BRSK2, DYRK2 and PDPK1. The residue at position 531 (S531) is a Phosphoserine; by PKA. T534 carries the post-translational modification Phosphothreonine; by PDPK1. N-linked (Glc) (glycation) lysine; in PHF-tau; in vitro glycosylation is present at K542. Position 542 is an N6-acetyllysine (K542). T548 carries the phosphothreonine; by GSK3-beta and PDPK1 modification. N-linked (Glc) (glycation) lysine; in PHF-tau; in vitro glycosylation occurs at K551. S552 bears the Phosphoserine; by PDPK1 mark. At S554 the chain carries Phosphoserine; by PHK. The O-linked (GlcNAc) serine glycan is linked to S555. Tau/MAP repeat units lie at residues 561-591, 592-622, 623-653, and 654-685; these read QTAP…GGGK, VQII…GGGS, VQIV…GGGQ, and VEVK…GGGN. Residues 561 to 685 are microtubule-binding domain; that stretch reads QTAPVPMPDL…NITHVPGGGN (125 aa). K571 is covalently cross-linked (Glycyl lysine isopeptide (Lys-Gly) (interchain with G-Cter in ubiquitin); in PHF-tau). N-linked (Glc) (glycation) lysine; in PHF-tau; in vitro glycosylation is present at K576. The residue at position 576 (K576) is an N6-acetyllysine; alternate. K576 carries the N6-methyllysine; alternate modification. K576 is covalently cross-linked (Glycyl lysine isopeptide (Lys-Gly) (interchain with G-Cter in ubiquitin); alternate). The residue at position 579 (S579) is a Phosphoserine; by MARK1, MARK2, MARK3, MARK4, BRSK1, BRSK2 and PHK. Residue K584 forms a Glycyl lysine isopeptide (Lys-Gly) (interchain with G-Cter in ubiquitin) linkage. N596 carries the post-translational modification Deamidated asparagine; in tau and PHF-tau; partial. 2 N-linked (Glc) (glycation) lysine; in PHF-tau; in vitro glycosylation sites follow: K597 and K598. K598 carries the post-translational modification N6-acetyllysine; alternate. A Glycyl lysine isopeptide (Lys-Gly) (interchain with G-Cter in ubiquitin); alternate cross-link involves residue K598. S602 is modified (phosphoserine; by PHK). The residue at position 607 (K607) is an N6-acetyllysine. An intrachain disulfide couples C608 to C639. Residue S610 is modified to Phosphoserine. At K615 the chain carries N6-acetyllysine; alternate. K615 participates in a covalent cross-link: Glycyl lysine isopeptide (Lys-Gly) (interchain with G-Cter in ubiquitin); alternate. S622 is modified (phosphoserine; by PHK). An N6,N6-dimethyllysine; alternate modification is found at K628. K628, K634, and K638 each carry N6-acetyllysine; alternate. A Glycyl lysine isopeptide (Lys-Gly) (interchain with G-Cter in ubiquitin); in PHF-tau cross-link involves residue K628. Glycyl lysine isopeptide (Lys-Gly) (interchain with G-Cter in ubiquitin); alternate cross-links involve residues K634 and K638. S641 carries the post-translational modification Phosphoserine. K648, K660, and K664 each carry N6-acetyllysine; alternate. Glycyl lysine isopeptide (Lys-Gly) (interchain with G-Cter in ubiquitin); alternate cross-links involve residues K648, K660, and K664. N-linked (Glc) (glycation) lysine; in PHF-tau; in vitro glycosylation occurs at K664. The residue at position 666 (R666) is an Omega-N-methylarginine. The residue at position 669 (S669) is a Phosphoserine; by PHK. An N-linked (Glc) (glycation) lysine; in PHF-tau; in vitro glycan is attached at K670. A Glycyl lysine isopeptide (Lys-Gly) (interchain with G-Cter in ubiquitin); in PHF-tau cross-link involves residue K670. S673 is modified (phosphoserine). An N-linked (Glc) (glycation) lysine; in PHF-tau; in vitro glycan is attached at K686. K686 is subject to N6-acetyllysine; alternate. Residue K686 forms a Glycyl lysine isopeptide (Lys-Gly) (interchain with G-Cter in ubiquitin); alternate linkage. Residue K692 forms a Glycyl lysine isopeptide (Lys-Gly) (interchain with G-Cter in ubiquitin) linkage. Position 702 is an N6-acetyllysine; alternate (K702). A Glycyl lysine isopeptide (Lys-Gly) (interchain with G-Cter in ubiquitin); alternate cross-link involves residue K702. Y711 carries the phosphotyrosine modification. A Phosphoserine; by CK1 and PDPK1 modification is found at S713. A disordered region spans residues 715 to 734; it reads VVSGDTSPRHLSNVSSTGSI. Phosphoserine; alternate is present on S717. An O-linked (GlcNAc) serine; alternate glycan is attached at S717. The segment covering 718-733 has biased composition (polar residues); that stretch reads GDTSPRHLSNVSSTGS. T720 is modified (phosphothreonine). Residue S721 is modified to Phosphoserine; by CK1 and PDPK1. Phosphoserine is present on S726. S733 is modified (phosphoserine; by CaMK2 and TTBK1). Phosphoserine; by PDPK1 and TTBK1 is present on S739. T744 is modified (phosphothreonine; by TTBK1).

In terms of assembly, interacts with MARK1, MARK2, MARK3 and MARK4. Interacts with PSMC2 through SQSTM1. Interacts with SQSTM1 when polyubiquitinated. Interacts with FKBP4. Binds to CSNK1D. Interacts with SGK1. Interacts with EPM2A; the interaction dephosphorylates MAPT at Ser-396. Interacts with PIN1. Interacts with LRRK2. Interacts with LRP1, leading to endocytosis; this interaction is reduced in the presence of LRPAP1/RAP. Phosphorylation at serine and threonine residues in S-P or T-P motifs by proline-directed protein kinases (PDPK1, CDK1, CDK5, GSK3, MAPK) (only 2-3 sites per protein in interphase, seven-fold increase in mitosis, and in the form associated with paired helical filaments (PHF-tau)), and at serine residues in K-X-G-S motifs by MAP/microtubule affinity-regulating kinase (MARK1, MARK2, MARK3 or MARK4), causing detachment from microtubules, and their disassembly. Phosphorylation decreases with age. Phosphorylation within tau/MAP's repeat domain or in flanking regions seems to reduce tau/MAP's interaction with, respectively, microtubules or plasma membrane components. Phosphorylation on Ser-610, Ser-622, Ser-641 and Ser-673 in several isoforms during mitosis. Phosphorylation at Ser-548 by GSK3B reduces ability to bind and stabilize microtubules. Phosphorylation at Ser-579 by BRSK1 and BRSK2 in neurons affects ability to bind microtubules and plays a role in neuron polarization. Phosphorylated at Ser-554, Ser-579, Ser-602, Ser-606 and Ser-669 by PHK. Phosphorylation at Ser-214 by SGK1 mediates microtubule depolymerization and neurite formation in hippocampal neurons. There is a reciprocal down-regulation of phosphorylation and O-GlcNAcylation. Phosphorylation on Ser-717 completely abolishes the O-GlcNAcylation on this site, while phosphorylation on Ser-713 and Ser-721 reduces glycosylation by a factor of 2 and 4 respectively. Phosphorylation on Ser-721 is reduced by about 41.5% by GlcNAcylation on Ser-717. Dephosphorylated at several serine and threonine residues by the serine/threonine phosphatase PPP5C. Post-translationally, polyubiquitinated. Requires functional TRAF6 and may provoke SQSTM1-dependent degradation by the proteasome. PHF-tau can be modified by three different forms of polyubiquitination. 'Lys-48'-linked polyubiquitination is the major form, 'Lys-6'-linked and 'Lys-11'-linked polyubiquitination also occur. In terms of processing, O-glycosylated. O-GlcNAcylation content is around 8.2%. There is reciprocal down-regulation of phosphorylation and O-GlcNAcylation. Phosphorylation on Ser-717 completely abolishes the O-GlcNAcylation on this site, while phosphorylation on Ser-713 and Ser-721 reduces O-GlcNAcylation by a factor of 2 and 4 respectively. O-GlcNAcylation on Ser-717 decreases the phosphorylation on Ser-721 by about 41.5%. Glycation of PHF-tau, but not normal brain TAU/MAPT. Glycation is a non-enzymatic post-translational modification that involves a covalent linkage between a sugar and an amino group of a protein molecule forming ketoamine. Subsequent oxidation, fragmentation and/or cross-linking of ketoamine leads to the production of advanced glycation endproducts (AGES). Glycation may play a role in stabilizing PHF aggregation leading to tangle formation in AD. Expressed in neurons. Isoform PNS-tau is expressed in the peripheral nervous system while the others are expressed in the central nervous system.

It is found in the cytoplasm. The protein resides in the cytosol. It localises to the cell membrane. The protein localises to the cytoskeleton. Its subcellular location is the cell projection. It is found in the axon. The protein resides in the dendrite. It localises to the secreted. In terms of biological role, promotes microtubule assembly and stability, and might be involved in the establishment and maintenance of neuronal polarity. The C-terminus binds axonal microtubules while the N-terminus binds neural plasma membrane components, suggesting that tau functions as a linker protein between both. Axonal polarity is predetermined by TAU/MAPT localization (in the neuronal cell) in the domain of the cell body defined by the centrosome. The short isoforms allow plasticity of the cytoskeleton whereas the longer isoforms may preferentially play a role in its stabilization. The sequence is that of Microtubule-associated protein tau from Homo sapiens (Human).